The chain runs to 275 residues: Elongation factor Ts (275 aa).

Positions 76–79 (TDFV) are involved in Mg(2+) ion dislocation from EF-Tu.

This sequence belongs to the EF-Ts family.

It is found in the cytoplasm. Associates with the EF-Tu.GDP complex and induces the exchange of GDP to GTP. It remains bound to the aminoacyl-tRNA.EF-Tu.GTP complex up to the GTP hydrolysis stage on the ribosome. The chain is Elongation factor Ts from Corynebacterium diphtheriae (strain ATCC 700971 / NCTC 13129 / Biotype gravis).